The following is a 610-amino-acid chain: 1,8-cineol synthase, chloroplastic (610 aa).

The transit peptide at 1 to 51 (MNHHLIITPIFHLQIMLPVATLKRPPPPAATCSIYSFSRGTPSLVSKARLS) directs the protein to the chloroplast. Residues R322, D359, D363, R500, and N503 each coordinate (2E)-geranyl diphosphate. 2 residues coordinate Mg(2+): D359 and D363. Residues 359 to 363 (DDVYD) carry the DDXXD motif motif. Residues N503, T507, and E511 each contribute to the Mg(2+) site.

This sequence belongs to the terpene synthase family. Tpsb subfamily. As to quaternary structure, monomer. Mg(2+) serves as cofactor. Mn(2+) is required as a cofactor. In terms of tissue distribution, confined to buds and flowers.

It localises to the plastid. It is found in the chloroplast. It catalyses the reaction (2E)-geranyl diphosphate + H2O = 1,8-cineole + diphosphate. It carries out the reaction (2E)-geranyl diphosphate = limonene + diphosphate. The catalysed reaction is (2E)-geranyl diphosphate = sabinene + diphosphate. The enzyme catalyses (2E)-geranyl diphosphate = (E)-beta-ocimene + diphosphate. It catalyses the reaction (2E)-geranyl diphosphate = beta-myrcene + diphosphate. It carries out the reaction (2E)-geranyl diphosphate = alpha-pinene + diphosphate. The catalysed reaction is (2E)-geranyl diphosphate + H2O = (S)-alpha-terpineol + diphosphate. It participates in secondary metabolite biosynthesis; terpenoid biosynthesis. Monoterpene synthase involved in the biosynthesis of monoterpene natural products of the 'cineole cassette', volatile compounds present in floral scent. Catalyzes the conversion of (2E)-geranyl diphosphate (GPP) into 1,8-cineole and, as minor products, limonene, sabinene, (E)-beta-ocimene, beta-myrcene, alpha-pinene and alpha-terpineol. The protein is 1,8-cineol synthase, chloroplastic of Nicotiana suaveolens (Australian tobacco).